Consider the following 419-residue polypeptide: Histidine--tRNA ligase (419 aa).

Belongs to the class-II aminoacyl-tRNA synthetase family. As to quaternary structure, homodimer.

The protein localises to the cytoplasm. It catalyses the reaction tRNA(His) + L-histidine + ATP = L-histidyl-tRNA(His) + AMP + diphosphate + H(+). This chain is Histidine--tRNA ligase, found in Desulfatibacillum aliphaticivorans.